Here is a 65-residue protein sequence, read N- to C-terminus: Large ribosomal subunit protein bL35 (65 aa).

The tract at residues M1–I22 is disordered.

Belongs to the bacterial ribosomal protein bL35 family.

The protein is Large ribosomal subunit protein bL35 of Flavobacterium psychrophilum (strain ATCC 49511 / DSM 21280 / CIP 103535 / JIP02/86).